The chain runs to 252 residues: Homeobox protein EMX2 (252 aa).

The segment at residues 154-213 is a DNA-binding region (homeobox); sequence PKRIRTAFSPSQLLRLEHAFEKNHYVVGAERKQLAHSLSLTETQVKVWFQNRRTKFKRQK. Residues 212–252 form a disordered region; sequence QKLEEEGSDSQQKKKGTHHINRWRIATKQASPEEIDVTSDD. Residues 224–233 show a composition bias toward basic residues; sequence KKKGTHHINR.

This sequence belongs to the EMX homeobox family. As to quaternary structure, interacts with translation initiation factor EIF4E. Cerebral cortex.

It is found in the nucleus. The protein resides in the cell projection. Its subcellular location is the axon. In terms of biological role, transcription factor, which in cooperation with EMX1, acts to generate the boundary between the roof and archipallium in the developing brain. May function in combination with OTX1/2 to specify cell fates in the developing central nervous system. In the inner ear, it controls the distribution of GPR156 at hair cell boundaries, and regulates the organization of stereociliary bundles in opposite orientations across the line of polarity reversal (LPR). This chain is Homeobox protein EMX2 (EMX2), found in Homo sapiens (Human).